The chain runs to 247 residues: Cell division protein ZapD (247 aa).

The protein belongs to the ZapD family. As to quaternary structure, interacts with FtsZ.

Its subcellular location is the cytoplasm. Cell division factor that enhances FtsZ-ring assembly. Directly interacts with FtsZ and promotes bundling of FtsZ protofilaments, with a reduction in FtsZ GTPase activity. This is Cell division protein ZapD from Escherichia coli O17:K52:H18 (strain UMN026 / ExPEC).